The chain runs to 416 residues: Gamma-glutamyl phosphate reductase (416 aa).

This sequence belongs to the gamma-glutamyl phosphate reductase family.

It is found in the cytoplasm. It catalyses the reaction L-glutamate 5-semialdehyde + phosphate + NADP(+) = L-glutamyl 5-phosphate + NADPH + H(+). Its pathway is amino-acid biosynthesis; L-proline biosynthesis; L-glutamate 5-semialdehyde from L-glutamate: step 2/2. In terms of biological role, catalyzes the NADPH-dependent reduction of L-glutamate 5-phosphate into L-glutamate 5-semialdehyde and phosphate. The product spontaneously undergoes cyclization to form 1-pyrroline-5-carboxylate. In Salmonella arizonae (strain ATCC BAA-731 / CDC346-86 / RSK2980), this protein is Gamma-glutamyl phosphate reductase.